Here is a 549-residue protein sequence, read N- to C-terminus: Glucose-6-phosphate isomerase (549 aa).

The Proton donor role is filled by Glu-355. Active-site residues include His-386 and Lys-514.

This sequence belongs to the GPI family.

The protein localises to the cytoplasm. It catalyses the reaction alpha-D-glucose 6-phosphate = beta-D-fructose 6-phosphate. Its pathway is carbohydrate biosynthesis; gluconeogenesis. The protein operates within carbohydrate degradation; glycolysis; D-glyceraldehyde 3-phosphate and glycerone phosphate from D-glucose: step 2/4. In terms of biological role, catalyzes the reversible isomerization of glucose-6-phosphate to fructose-6-phosphate. In Salmonella paratyphi A (strain AKU_12601), this protein is Glucose-6-phosphate isomerase.